The primary structure comprises 487 residues: Calcium-dependent mitochondrial ATP-magnesium/phosphate carrier protein 2 (487 aa).

Residues 1–211 (MEATKSSKQN…ISKHIKRSNY (211 aa)) lie on the Mitochondrial intermembrane side of the membrane. 4 consecutive EF-hand domains span residues 36-71 (ERDL…LQIP), 72-107 (SGYK…KELE), 108-138 (LYRI…AGIE), and 139-174 (IKDE…YPHE). Ca(2+) is bound by residues D85, N87, D89, R91, and E96. Ca(2+) is bound by residues D152, D154, D156, and E163. 3 Solcar repeats span residues 206–289 (IKRS…FKNA), 301–389 (IGTT…LKDL), and 400–483 (PGPL…MKKS). The chain crosses the membrane as a helical span at residues 212–229 (FIAGGIAGAASRTATAPL). Residues 230–263 (DRLKVLLQIQKTDARIREAIKLIWKQGGVRGFFR) lie on the Mitochondrial matrix side of the membrane. The helical transmembrane segment at 264–283 (GNGLNIVKVAPESAIKFYAY) threads the bilayer. Over 284 to 310 (ELFKNAIGENMGEDKADIGTTVRLFAG) the chain is Mitochondrial intermembrane. The helical transmembrane segment at 311-324 (GMAGAVAQASIYPL) threads the bilayer. The Mitochondrial matrix segment spans residues 325–363 (DLVKTRLQTYTSQAGVAVPRLGTLTKDILVHEGPRAFYK). The helical transmembrane segment at 364 to 383 (GLFPSLLGIIPYAGIDLAAY) threads the bilayer. The Mitochondrial intermembrane portion of the chain corresponds to 384–405 (ETLKDLSRTYILQDAEPGPLVQ). The helical transmembrane segment at 406–423 (LGCGTISGALGATCVYPL) threads the bilayer. Residues 424-457 (QVVRTRMQAERARTSMSGVFRRTISEEGYRALYK) lie on the Mitochondrial matrix side of the membrane. Residues 458 to 477 (GLLPNLLKVVPAASITYMVY) form a helical membrane-spanning segment. Residues 478–487 (EAMKKSLELD) lie on the Mitochondrial intermembrane side of the membrane.

Belongs to the mitochondrial carrier (TC 2.A.29) family. As to expression, expressed in flowers, leaves, stems, roots and seedlings, mostly in aerial parts.

The protein resides in the mitochondrion inner membrane. With respect to regulation, counter-exchange transport activity is saturable and inhibited by pyridoxal-5'-phosphate, EDTA and EGTA. Activated by calcium Ca(2+) and manganese Mn(2+) ions, and slightly by iron Fe(2+) and zinc Zn(2+) ions. Repressed by copper ions Cu(2+) and slightly by magnesium Mg(2+) ions. Magnesium Mg(2+) ions promotes slightly ATP uptake, ATP-Mg(2+) being exchanged with ATP(4-). In terms of biological role, calcium-dependent mitochondrial carrier protein that catalyzes the import of ATP co-transported with metal divalent cations across the mitochondrial inner membrane in exchange for phosphate (Pi). Can transport phosphate, AMP, ADP, ATP, adenosine 5'-phosphosulfate, sulfate and thiosulfate, and, to a lesser extent, other nucleotides. Binds calcium ions Ca(2+). Also mediates calcium uptake. The polypeptide is Calcium-dependent mitochondrial ATP-magnesium/phosphate carrier protein 2 (Arabidopsis thaliana (Mouse-ear cress)).